The sequence spans 384 residues: Chaperone protein DnaJ 1 (384 aa).

One can recognise a J domain in the interval 4–68 (DYYGLLGVAR…EKRRIVDMGG (65 aa)). A CR-type zinc finger spans residues 133–215 (GVTKHLTVDT…CGGDGRVRAR (83 aa)). 8 residues coordinate Zn(2+): Cys146, Cys149, Cys163, Cys166, Cys189, Cys192, Cys203, and Cys206. 4 CXXCXGXG motif repeats span residues 146–153 (CDACHGSG), 163–170 (CETCGGAG), 189–196 (CPTCRGAG), and 203–210 (CHKCGGDG).

Belongs to the DnaJ family. As to quaternary structure, homodimer. It depends on Zn(2+) as a cofactor.

The protein localises to the cytoplasm. Functionally, participates actively in the response to hyperosmotic and heat shock by preventing the aggregation of stress-denatured proteins and by disaggregating proteins, also in an autonomous, DnaK-independent fashion. Unfolded proteins bind initially to DnaJ; upon interaction with the DnaJ-bound protein, DnaK hydrolyzes its bound ATP, resulting in the formation of a stable complex. GrpE releases ADP from DnaK; ATP binding to DnaK triggers the release of the substrate protein, thus completing the reaction cycle. Several rounds of ATP-dependent interactions between DnaJ, DnaK and GrpE are required for fully efficient folding. Also involved, together with DnaK and GrpE, in the DNA replication of plasmids through activation of initiation proteins. The chain is Chaperone protein DnaJ 1 from Nocardia farcinica (strain IFM 10152).